Consider the following 774-residue polypeptide: FT-interacting protein 7 (774 aa).

Basic and acidic residues predominate over residues 1-17 (MMQRPFRPEEYSLKETS). A disordered region spans residues 1–25 (MMQRPFRPEEYSLKETSPHLGGGAA). 3 C2 domains span residues 23 to 143 (GAAG…PQWY), 182 to 305 (IPGD…SQWY), and 346 to 472 (YSSD…THAY). Residues Asp56, Asp62, Asp109, Asp111, and Asp116 each contribute to the Ca(2+) site. The next 3 helical transmembrane spans lie at 575 to 595 (IMGV…ICHW), 606 to 626 (ILFV…FLYL), and 714 to 734 (ATAL…VTPF).

Belongs to the MCTP family. As to quaternary structure, interacts with OSH1. It depends on Ca(2+) as a cofactor. As to expression, expressed in roots, stems, lemma, palea, pistils and ovules. Expressed at low levels in leaves.

The protein localises to the cell membrane. In terms of biological role, promotes nuclear translocation of the transcription factor OSH1, which directly suppresses the auxin biosynthetic gene YUCCA4 during the late development of anthers. Reduction of auxin levels at late stage of anther development, after meiosis of microspore mother cells, is necessary for normal anther dehiscence and seed setting. Required for jasmonate (JA) biosynthetic genes expression and JA production in anthers. In Oryza sativa subsp. japonica (Rice), this protein is FT-interacting protein 7.